We begin with the raw amino-acid sequence, 392 residues long: MAEPSPAKVYSTGGLYRRWLGAILANDQGLDPEQLTQAALSALSQTSLRRDWPGVSAVLAAIALDLQRHDLRLEQVLFGCRFLNPVGLAAGFDKNGVAASIWDRFGFGFAELGTVTWHGQTGNPRPRLFRLAAEQAALNRMGFNNNGAEVMRRTLEKQALPSPGQRPAVLGLNLGKSRITPLEQAPDDYALSLELLAPLADYAVINVSSPNTPGLRDLQDASQLRRLVERLRRLPGCPPLLVKIAPDLEDDAIDGLARLAYEEGLAGVIAVNTSLDRFGLDGRVLPKTGRTLAEEAGGLSGAPLRQRALEVLRRLRATAGPALPLIGVGGIDSPEAAWERISAGASLVQLYTGWIFKGPDLVPNILDGLIGQLDRHGFRHVSEAVGSGVPWQ.

FMN contacts are provided by residues 90–94 (AGFDK) and Thr-114. Lys-94 serves as a coordination point for substrate. 139–143 (NRMGF) contributes to the substrate binding site. FMN is bound by residues Asn-173 and Asn-206. A substrate-binding site is contributed by Asn-206. Ser-209 (nucleophile) is an active-site residue. Asn-211 serves as a coordination point for substrate. 2 residues coordinate FMN: Lys-243 and Val-271. 272–273 (NT) contributes to the substrate binding site. FMN-binding positions include Gly-301, Gly-330, and 351–352 (YT).

The protein belongs to the dihydroorotate dehydrogenase family. Type 2 subfamily. Monomer. The cofactor is FMN.

The protein localises to the cell membrane. It catalyses the reaction (S)-dihydroorotate + a quinone = orotate + a quinol. It participates in pyrimidine metabolism; UMP biosynthesis via de novo pathway; orotate from (S)-dihydroorotate (quinone route): step 1/1. Its function is as follows. Catalyzes the conversion of dihydroorotate to orotate with quinone as electron acceptor. This chain is Dihydroorotate dehydrogenase (quinone), found in Prochlorococcus marinus (strain MIT 9313).